Reading from the N-terminus, the 510-residue chain is NAD(P) transhydrogenase subunit alpha (510 aa).

At 1 to 401 the chain is on the cytoplasmic side; that stretch reads MRIGIPRERL…EEKCTCSPWR (401 aa). NAD(+) is bound by residues 120–122, valine 175, 195–197, glutamate 238, and leucine 257; these read RIS and DTR. 2 helical membrane-spanning segments follow: residues 402 to 422 and 423 to 443; these read KYALMALAIILFGWMASVAPK and EFLGHFTVFALACVVGYYVVW. At 444–452 the chain is on the cytoplasmic side; the sequence is NVSHALHTP. The chain crosses the membrane as a helical span at residues 453–473; it reads LMSVTNAISGIIVVGALLQIG. The Periplasmic segment spans residues 474–476; sequence QGG. The helical transmembrane segment at 477–497 threads the bilayer; the sequence is WVSFLSFIAVLIASINIFGGF. Residues 498-510 are Cytoplasmic-facing; the sequence is TVTQRMLKMFRKN.

Belongs to the AlaDH/PNT family. In terms of assembly, heterodimer of an alpha (PntA) and a beta (PntB) chain. Alpha subunit serves as the dimerization unit.

The protein localises to the cell inner membrane. The catalysed reaction is NAD(+) + NADPH + H(+)(in) = NADH + NADP(+) + H(+)(out). Its function is as follows. The transhydrogenation between NADH and NADP is coupled to respiration and ATP hydrolysis and functions as a proton pump across the membrane. The chain is NAD(P) transhydrogenase subunit alpha (pntA) from Escherichia coli (strain K12).